A 188-amino-acid polypeptide reads, in one-letter code: Transcription antitermination protein NusB (188 aa).

The segment at 154-188 is disordered; sequence RAANPGAVSGSDAPVAPWDDSEELPAEDEAEDSRP. Positions 172-188 are enriched in acidic residues; sequence DDSEELPAEDEAEDSRP.

The protein belongs to the NusB family.

In terms of biological role, involved in transcription antitermination. Required for transcription of ribosomal RNA (rRNA) genes. Binds specifically to the boxA antiterminator sequence of the ribosomal RNA (rrn) operons. The sequence is that of Transcription antitermination protein NusB from Corynebacterium efficiens (strain DSM 44549 / YS-314 / AJ 12310 / JCM 11189 / NBRC 100395).